The following is a 295-amino-acid chain: Putative clathrin assembly protein At5g65370 (295 aa).

The ENTH domain occupies 26–169 (CSSVNAKTID…SIAEVLGITP (144 aa)).

It is found in the membrane. Its subcellular location is the clathrin-coated pit. The protein resides in the golgi apparatus. The protein localises to the cytoplasmic vesicle. It localises to the clathrin-coated vesicle. In Arabidopsis thaliana (Mouse-ear cress), this protein is Putative clathrin assembly protein At5g65370.